The chain runs to 183 residues: Early E3 20.2 kDa glycoprotein (183 aa).

Residues Asn-30, Asn-73, Asn-117, Asn-134, and Asn-135 are each glycosylated (N-linked (GlcNAc...) asparagine; by host).

Belongs to the adenoviridae E3_20 family.

The polypeptide is Early E3 20.2 kDa glycoprotein (Homo sapiens (Human)).